We begin with the raw amino-acid sequence, 259 residues long: Keratinocyte-associated transmembrane protein 2 (259 aa).

A signal peptide spans 1–44; the sequence is MAASALGRMCGAAREKLSPGPGARGLGALARSLVLALLLVPVLC. Over 45–190 the chain is Extracellular; sequence SDRSENPPNN…VKLPPPNRED (146 aa). Residues 47–155 form a disordered region; it reads RSENPPNNAT…YDWTTNPRDE (109 aa). Over residues 50–81 the composition is skewed to polar residues; it reads NPPNNATVSSPVVVTAPGNHTSPSVSQISTTL. Asn54 and Asn68 each carry an N-linked (GlcNAc...) asparagine glycan. Residues 82 to 104 are compositionally biased toward low complexity; that stretch reads SPASAEKSGSSSAAPTPTAAPSA. Positions 105–122 are enriched in acidic residues; it reads PEEEADSNEDPSMEEEDL. Ser165 bears the Phosphoserine mark. A helical membrane pass occupies residues 191-211; sequence SHFFFHLLIFAFCAAVVYVTY. The Cytoplasmic portion of the chain corresponds to 212–259; that stretch reads HNKRKIFLLVQSRKWRDGLCSKTVEYHRLDQNVNEAMPSLKITNDYIF. Phosphoserine occurs at positions 223 and 250.

It is found in the membrane. This chain is Keratinocyte-associated transmembrane protein 2 (Kct2), found in Mus musculus (Mouse).